Reading from the N-terminus, the 599-residue chain is UvrABC system protein C (599 aa).

One can recognise a GIY-YIG domain in the interval 15–93; that stretch reads DNPGVYQYYD…IKTLQPRYNI (79 aa). The region spanning 207–242 is the UVR domain; that stretch reads KDSMKDFKKVMTNLAQNMHFEEAQKIKEKIEILENY.

This sequence belongs to the UvrC family. Interacts with UvrB in an incision complex.

The protein localises to the cytoplasm. Functionally, the UvrABC repair system catalyzes the recognition and processing of DNA lesions. UvrC both incises the 5' and 3' sides of the lesion. The N-terminal half is responsible for the 3' incision and the C-terminal half is responsible for the 5' incision. The polypeptide is UvrABC system protein C (Flavobacterium psychrophilum (strain ATCC 49511 / DSM 21280 / CIP 103535 / JIP02/86)).